A 615-amino-acid chain; its full sequence is Filament-like plant protein 3 (615 aa).

Over residues 1-18 (MDRRSWLWRRKSSEKSPG) the composition is skewed to basic and acidic residues. Residues 1-55 (MDRRSWLWRRKSSEKSPGETESTGSVSSHSERFSDDQRSQSPELNSKPVTREEEA) form a disordered region. Residues 19-28 (ETESTGSVSS) are compositionally biased toward polar residues. Basic and acidic residues predominate over residues 29-38 (HSERFSDDQR). Polar residues predominate over residues 39 to 48 (SQSPELNSKP). Coiled-coil stretches lie at residues 87 to 121 (AEEAVSGWEKAENEAAALKQQLDASTSKVSALEDR) and 148 to 211 (EEAI…KSEE). Disordered stretches follow at residues 258–289 (DNSSDLKSSIDNQSDYSGRVSFSDNEMQSPSE) and 319–343 (PHSEPGRKHSESNKELEKSNAHVNQ). Residues 262–288 (DLKSSIDNQSDYSGRVSFSDNEMQSPS) show a composition bias toward polar residues. A compositionally biased stretch (basic and acidic residues) spans 322-343 (EPGRKHSESNKELEKSNAHVNQ). A coiled-coil region spans residues 327–563 (HSESNKELEK…KQELEHHQET (237 aa)).

Belongs to the FPP family. Interacts with WPP/MAF proteins. Binds to COG2; this interaction promotes the association between cortical microtubules and EXO70A1. Accumulates in preferentially xylem cells.

The protein resides in the vesicle. Its function is as follows. Ensures, when in complex with COG2 and FPP2/VETH2, the correct secondary cell wall (SCW) deposition pattern by recruiting exocyst components to cortical microtubules in xylem cells during secondary cell wall deposition by recruiting EXO70A1. This Arabidopsis thaliana (Mouse-ear cress) protein is Filament-like plant protein 3.